A 106-amino-acid chain; its full sequence is Replication restart protein PriB (106 aa).

One can recognise an SSB domain in the interval 4-103 (TNRLVLSGTV…LHAEQIEFID (100 aa)).

Belongs to the PriB family. As to quaternary structure, homodimer. Interacts with PriA and DnaT. Component of the replication restart primosome. Primosome assembly occurs via a 'hand-off' mechanism. PriA binds to replication forks, subsequently PriB then DnaT bind; DnaT then displaces ssDNA to generate the helicase loading substrate.

Functionally, involved in the restart of stalled replication forks, which reloads the replicative helicase on sites other than the origin of replication; the PriA-PriB pathway is the major replication restart pathway. During primosome assembly it facilitates complex formation between PriA and DnaT on DNA; stabilizes PriA on DNA. Stimulates the DNA unwinding activity of PriA helicase. The polypeptide is Replication restart protein PriB (Yersinia pestis).